Here is a 159-residue protein sequence, read N- to C-terminus: Ribosomal RNA large subunit methyltransferase H (159 aa).

S-adenosyl-L-methionine contacts are provided by residues Leu76, Gly108, and Phe127–Leu132.

The protein belongs to the RNA methyltransferase RlmH family. In terms of assembly, homodimer.

It is found in the cytoplasm. The enzyme catalyses pseudouridine(1915) in 23S rRNA + S-adenosyl-L-methionine = N(3)-methylpseudouridine(1915) in 23S rRNA + S-adenosyl-L-homocysteine + H(+). In terms of biological role, specifically methylates the pseudouridine at position 1915 (m3Psi1915) in 23S rRNA. This chain is Ribosomal RNA large subunit methyltransferase H, found in Bacillus cereus (strain ATCC 14579 / DSM 31 / CCUG 7414 / JCM 2152 / NBRC 15305 / NCIMB 9373 / NCTC 2599 / NRRL B-3711).